The primary structure comprises 270 residues: Glutamate racemase (270 aa).

Residues 7 to 8 (DS) and 39 to 40 (YG) contribute to the substrate site. The active-site Proton donor/acceptor is the C70. 71-72 (NT) lines the substrate pocket. The active-site Proton donor/acceptor is C194. 195–196 (TH) contributes to the substrate binding site.

This sequence belongs to the aspartate/glutamate racemases family.

The enzyme catalyses L-glutamate = D-glutamate. The protein operates within cell wall biogenesis; peptidoglycan biosynthesis. Its function is as follows. Provides the (R)-glutamate required for cell wall biosynthesis. The protein is Glutamate racemase of Cereibacter sphaeroides (strain ATCC 17025 / ATH 2.4.3) (Rhodobacter sphaeroides).